A 1092-amino-acid chain; its full sequence is Isoleucine--tRNA ligase (1092 aa).

The 'HIGH' region signature appears at 53 to 63 (PFANGLPHYGH). Positions 613 to 617 (KLSKR) match the 'KMSKS' region motif. K616 contributes to the ATP binding site.

The protein belongs to the class-I aminoacyl-tRNA synthetase family. IleS type 2 subfamily. Monomer. The cofactor is Zn(2+).

Its subcellular location is the cytoplasm. The catalysed reaction is tRNA(Ile) + L-isoleucine + ATP = L-isoleucyl-tRNA(Ile) + AMP + diphosphate. In terms of biological role, catalyzes the attachment of isoleucine to tRNA(Ile). As IleRS can inadvertently accommodate and process structurally similar amino acids such as valine, to avoid such errors it has two additional distinct tRNA(Ile)-dependent editing activities. One activity is designated as 'pretransfer' editing and involves the hydrolysis of activated Val-AMP. The other activity is designated 'posttransfer' editing and involves deacylation of mischarged Val-tRNA(Ile). The polypeptide is Isoleucine--tRNA ligase (Rickettsia africae (strain ESF-5)).